The primary structure comprises 527 residues: Protein PyrBI (527 aa).

The tract at residues M1 to F342 is aspartate carbamoyltransferase. The interval D343 to I357 is linker. The aspartate carbamoyltransferase regulatory region stretch occupies residues V368 to I527. 4 residues coordinate Zn(2+): C483, C488, C512, and C515.

It in the N-terminal section; belongs to the aspartate/ornithine carbamoyltransferase superfamily. ATCase family. In the C-terminal section; belongs to the PyrI family.

It catalyses the reaction carbamoyl phosphate + L-aspartate = N-carbamoyl-L-aspartate + phosphate + H(+). Its pathway is pyrimidine metabolism; UMP biosynthesis via de novo pathway; (S)-dihydroorotate from bicarbonate: step 2/3. The chain is Protein PyrBI (pyrBI) from Thermotoga maritima (strain ATCC 43589 / DSM 3109 / JCM 10099 / NBRC 100826 / MSB8).